A 187-amino-acid polypeptide reads, in one-letter code: MPKPKKGARFGGSASHQKAIFANLATALFEHGRITTTESKAKALRPYAEKLVTHAKAGTLAHRREVLKVIRNKDVVHTLFAEIGPFYADRDGGYTRIIKTVPRKGDNAPMAIIELVKEKTVTSEADRARRVKASQDAPAAAPAEENVVEAVEAEATDAEVENADAVVEAIEDETAADAPEAEEAKKD.

Belongs to the bacterial ribosomal protein bL17 family. Part of the 50S ribosomal subunit. Contacts protein L32.

The chain is Large ribosomal subunit protein bL17 from Rhodococcus opacus (strain B4).